A 193-amino-acid polypeptide reads, in one-letter code: Peptidyl-tRNA hydrolase (193 aa).

Tyr17 is a binding site for tRNA. His22 (proton acceptor) is an active-site residue. Residues Phe68, Asn70, and Asn116 each contribute to the tRNA site.

Belongs to the PTH family. In terms of assembly, monomer.

It localises to the cytoplasm. It carries out the reaction an N-acyl-L-alpha-aminoacyl-tRNA + H2O = an N-acyl-L-amino acid + a tRNA + H(+). In terms of biological role, hydrolyzes ribosome-free peptidyl-tRNAs (with 1 or more amino acids incorporated), which drop off the ribosome during protein synthesis, or as a result of ribosome stalling. Its function is as follows. Catalyzes the release of premature peptidyl moieties from peptidyl-tRNA molecules trapped in stalled 50S ribosomal subunits, and thus maintains levels of free tRNAs and 50S ribosomes. In Acinetobacter baylyi (strain ATCC 33305 / BD413 / ADP1), this protein is Peptidyl-tRNA hydrolase.